The following is a 1121-amino-acid chain: RecBCD enzyme subunit RecC (1121 aa).

It belongs to the RecC family. As to quaternary structure, heterotrimer of RecB, RecC and RecD. All subunits contribute to DNA-binding.

Functionally, a helicase/nuclease that prepares dsDNA breaks (DSB) for recombinational DNA repair. Binds to DSBs and unwinds DNA via a highly rapid and processive ATP-dependent bidirectional helicase activity. Unwinds dsDNA until it encounters a Chi (crossover hotspot instigator) sequence from the 3' direction. Cuts ssDNA a few nucleotides 3' to the Chi site. The properties and activities of the enzyme are changed at Chi. The Chi-altered holoenzyme produces a long 3'-ssDNA overhang and facilitates RecA-binding to the ssDNA for homologous DNA recombination and repair. Holoenzyme degrades any linearized DNA that is unable to undergo homologous recombination. In the holoenzyme this subunit recognizes the wild-type Chi sequence, and when added to isolated RecB increases its ATP-dependent helicase processivity. This is RecBCD enzyme subunit RecC from Haemophilus influenzae (strain ATCC 51907 / DSM 11121 / KW20 / Rd).